A 37-amino-acid chain; its full sequence is Lambda-hexatoxin-Hv1c (37 aa).

Intrachain disulfides connect cysteine 3–cysteine 17, cysteine 10–cysteine 22, cysteine 13–cysteine 14, and cysteine 16–cysteine 32.

The protein belongs to the neurotoxin 11 (kappa toxin) family. Expressed by the venom gland.

It localises to the secreted. This excitatory toxin inhibits insect calcium-activated potassium (KCa) channels (Slo-type). Pan-neuronal expression in Drosophila is lethal but flies engineered to express the toxin only in clock neurons have defects in circadian rhythm but a normal lifespan. The chain is Lambda-hexatoxin-Hv1c from Hadronyche versuta (Blue mountains funnel-web spider).